We begin with the raw amino-acid sequence, 595 residues long: Putative terpenoid synthase 16 (595 aa).

Mg(2+) is bound by residues D349, D353, N494, and D502. The short motif at 349–353 (DDTCD) is the DDXXD motif element.

The protein belongs to the terpene synthase family. Tpsa subfamily. Mg(2+) is required as a cofactor. It depends on Mn(2+) as a cofactor.

The protein localises to the cytoplasm. It participates in secondary metabolite biosynthesis; terpenoid biosynthesis. This Arabidopsis thaliana (Mouse-ear cress) protein is Putative terpenoid synthase 16 (TPS16).